Consider the following 708-residue polypeptide: Radial spoke head protein 6 homolog A (708 aa).

Disordered stretches follow at residues 1-94, 376-407, 495-514, and 663-708; these read MGEP…GYTP, ETHG…IIPK, EEEG…FEEN, and GPEI…DLED. The segment covering 10–32 has biased composition (polar residues); that stretch reads PSQTRRASQGSERARSQEYSQPL. A compositionally biased stretch (low complexity) spans 47 to 56; that stretch reads RGSRSSQGSQ. A compositionally biased stretch (acidic residues) spans 495–504; that stretch reads EEEGDEEEEG. Over residues 680–690 the composition is skewed to low complexity; that stretch reads LKAAQEQALAA. Over residues 691–708 the composition is skewed to acidic residues; it reads AEEEEEDEEEEEDEDLED.

It belongs to the flagellar radial spoke RSP4/6 family. Component of the axonemal radial spoke 1 (RS1) and 2 (RS2) complexes, at least composed of spoke head proteins RSPH1, RSPH3, RSPH9 and the cilia-specific component RSPH4A or sperm-specific component RSPH6A, spoke stalk proteins RSPH14, DNAJB13, DYDC1, ROPN1L and NME5, and the RS1 complex-specific anchor protein IQUB. Interacts with RSPH1. Interacts with RSPH3B. Interacts with RSPH4A. Interacts with RSPH9. Interacts with RSPH10B. In terms of processing, phosphorylated by PKA. Phosphorylation increases in capacitated sperm. As to expression, expressed in sperm and testis (at protein level).

It is found in the cytoplasm. The protein localises to the cytoskeleton. It localises to the flagellum axoneme. Functions as part of radial spoke complexes in the axoneme of sperm flagella that play an important part in motility. The triple radial spokes (RS1, RS2 and RS3) are required to modulate beating of the sperm flagellum. This Mus musculus (Mouse) protein is Radial spoke head protein 6 homolog A.